Reading from the N-terminus, the 290-residue chain is 4-hydroxybenzoate octaprenyltransferase (290 aa).

Helical transmembrane passes span 23 to 43, 46 to 66, 99 to 119, 141 to 161, 163 to 183, 213 to 233, 234 to 254, and 268 to 288; these read IGAL…TPGV, LWIL…GCVV, LFVV…TMTI, LPQV…FAAV, ESVP…AVAY, LIIG…GELN, GLGW…VYQQ, and AFMN…MSYW.

This sequence belongs to the UbiA prenyltransferase family. It depends on Mg(2+) as a cofactor.

Its subcellular location is the cell inner membrane. The catalysed reaction is all-trans-octaprenyl diphosphate + 4-hydroxybenzoate = 4-hydroxy-3-(all-trans-octaprenyl)benzoate + diphosphate. The protein operates within cofactor biosynthesis; ubiquinone biosynthesis. In terms of biological role, catalyzes the prenylation of para-hydroxybenzoate (PHB) with an all-trans polyprenyl group. Mediates the second step in the final reaction sequence of ubiquinone-8 (UQ-8) biosynthesis, which is the condensation of the polyisoprenoid side chain with PHB, generating the first membrane-bound Q intermediate 3-octaprenyl-4-hydroxybenzoate. In Escherichia coli (strain UTI89 / UPEC), this protein is 4-hydroxybenzoate octaprenyltransferase.